The primary structure comprises 473 residues: Ribulose bisphosphate carboxylase large chain (473 aa).

Positions 1–2 (MS) are excised as a propeptide. The residue at position 3 (P3) is an N-acetylproline. N6,N6,N6-trimethyllysine is present on K14. The substrate site is built by N123 and T173. K175 (proton acceptor) is an active-site residue. Position 177 (K177) interacts with substrate. Residues K201, D203, and E204 each contribute to the Mg(2+) site. The residue at position 201 (K201) is an N6-carboxylysine. H294 (proton acceptor) is an active-site residue. R295, H327, and S379 together coordinate substrate.

The protein belongs to the RuBisCO large chain family. Type I subfamily. As to quaternary structure, heterohexadecamer of 8 large chains and 8 small chains; disulfide-linked. The disulfide link is formed within the large subunit homodimers. Mg(2+) is required as a cofactor. Post-translationally, the disulfide bond which can form in the large chain dimeric partners within the hexadecamer appears to be associated with oxidative stress and protein turnover.

The protein resides in the plastid. Its subcellular location is the chloroplast. The catalysed reaction is 2 (2R)-3-phosphoglycerate + 2 H(+) = D-ribulose 1,5-bisphosphate + CO2 + H2O. It catalyses the reaction D-ribulose 1,5-bisphosphate + O2 = 2-phosphoglycolate + (2R)-3-phosphoglycerate + 2 H(+). In terms of biological role, ruBisCO catalyzes two reactions: the carboxylation of D-ribulose 1,5-bisphosphate, the primary event in carbon dioxide fixation, as well as the oxidative fragmentation of the pentose substrate in the photorespiration process. Both reactions occur simultaneously and in competition at the same active site. The sequence is that of Ribulose bisphosphate carboxylase large chain from Sesbania sesban (Egyptian riverhemp).